A 185-amino-acid polypeptide reads, in one-letter code: Capsid protein (185 aa).

Positions 136-185 (NAPILSTLPETTVVRRRDRGRSPRRRTPSPRRRRSQSPRRRRSQSRESQC) are disordered. Residues 149–178 (VRRRDRGRSPRRRTPSPRRRRSQSPRRRRS) are compositionally biased toward basic residues. A phosphoserine; by host mark is found at serine 157, serine 164, and serine 172. The 1; half-length repeat unit spans residues 157–163 (SPRRRTP). The interval 157–179 (SPRRRTPSPRRRRSQSPRRRRSQ) is 3 X 8 AA repeats of S-P-R-R-R-[PR]-S-Q. The short motif at 160–177 (RRTPSPRRRRSQSPRRRR) is the Bipartite nuclear localization signal element. Tandem repeats lie at residues 164 to 171 (SPRRRRSQ) and 172 to 179 (SPRRRRSQ). The tract at residues 179–185 (QSRESQC) is RNA binding.

The protein belongs to the orthohepadnavirus core antigen family. As to quaternary structure, homodimerizes, then multimerizes. Interacts with cytosol exposed regions of viral L glycoprotein present in the reticulum-to-Golgi compartment. Interacts with human FLNB. Phosphorylated form interacts with host importin alpha; this interaction depends on the exposure of the NLS, which itself depends upon genome maturation and/or phosphorylation of the capsid protein. Interacts with host NUP153. Post-translationally, phosphorylated by host SRPK1, SRPK2, and maybe protein kinase C or GAPDH. Phosphorylation is critical for pregenomic RNA packaging. Protein kinase C phosphorylation is stimulated by HBx protein and may play a role in transport of the viral genome to the nucleus at the late step during the viral replication cycle.

Its subcellular location is the virion. It localises to the host cytoplasm. Self assembles to form an icosahedral capsid. Most capsids appear to be large particles with an icosahedral symmetry of T=4 and consist of 240 copies of capsid protein, though a fraction forms smaller T=3 particles consisting of 180 capsid proteins. Entering capsids are transported along microtubules to the nucleus. Phosphorylation of the capsid is thought to induce exposure of nuclear localization signal in the C-terminal portion of the capsid protein that allows binding to the nuclear pore complex via the importin (karyopherin-) alpha and beta. Capsids are imported in intact form through the nuclear pore into the nuclear basket, where it probably binds NUP153. Only capsids that contain the mature viral genome can release the viral DNA and capsid protein into the nucleoplasm. Immature capsids get stuck in the basket. Capsids encapsulate the pre-genomic RNA and the P protein. Pre-genomic RNA is reverse-transcribed into DNA while the capsid is still in the cytoplasm. The capsid can then either be directed to the nucleus, providing more genomes for transcription, or bud through the endoplasmic reticulum to provide new virions. The chain is Capsid protein from Homo sapiens (Human).